The sequence spans 971 residues: Zinc finger CCCH domain-containing protein 7A (971 aa).

TPR repeat units follow at residues 43 to 76 (VRNL…ADYA), 89 to 122 (EKLY…NASN), and 124 to 156 (KALY…VPQD). Threonine 210 is subject to Phosphothreonine. 2 C3H1-type zinc fingers span residues 634–656 (LCRH…HSLV) and 769–797 (PLQF…HSPE). A C2H2-type zinc finger spans residues 857-881 (FHCWMCGKNCNSEKQWQGHISSEKH). The C3H1-type 3 zinc-finger motif lies at 906–928 (ICDRYMNGTCPEGNSCKFAHGNA). Residues 924–952 (AHGNAELHEWEERRDALKMKLNKARKDHL) adopt a coiled-coil conformation.

It localises to the nucleus. Functionally, may be a specific regulator of miRNA biogenesis. Binds to microRNAs MIR7-1, MIR16-2 and MIR29A hairpins recognizing the 3'-ATA(A/T)-5' motif in the apical loop. The polypeptide is Zinc finger CCCH domain-containing protein 7A (ZC3H7A) (Homo sapiens (Human)).